A 157-amino-acid chain; its full sequence is GDP-mannose mannosyl hydrolase (157 aa).

Residues Phe-2 to Leu-3, Phe-8, and Arg-36 each bind substrate. The region spanning Leu-3–Pro-153 is the Nudix hydrolase domain. Mg(2+)-binding residues include Gly-49, Glu-69, and Gln-122. The Nudix box motif lies at Gly-50 to Gly-71.

The protein belongs to the Nudix hydrolase family. Homodimer. Mg(2+) is required as a cofactor.

The catalysed reaction is GDP-alpha-D-mannose + H2O = D-mannose + GDP + H(+). Hydrolyzes GDP-mannose. This is GDP-mannose mannosyl hydrolase from Salmonella typhi.